Here is a 214-residue protein sequence, read N- to C-terminus: Probable nicotinate-nucleotide adenylyltransferase (214 aa).

The protein belongs to the NadD family.

The catalysed reaction is nicotinate beta-D-ribonucleotide + ATP + H(+) = deamido-NAD(+) + diphosphate. It functions in the pathway cofactor biosynthesis; NAD(+) biosynthesis; deamido-NAD(+) from nicotinate D-ribonucleotide: step 1/1. Catalyzes the reversible adenylation of nicotinate mononucleotide (NaMN) to nicotinic acid adenine dinucleotide (NaAD). The polypeptide is Probable nicotinate-nucleotide adenylyltransferase (Mycolicibacterium vanbaalenii (strain DSM 7251 / JCM 13017 / BCRC 16820 / KCTC 9966 / NRRL B-24157 / PYR-1) (Mycobacterium vanbaalenii)).